The primary structure comprises 480 residues: Protein nucleotidyltransferase YdiU (480 aa).

ATP contacts are provided by glycine 86, glycine 88, arginine 89, lysine 109, aspartate 121, glycine 122, arginine 172, and arginine 179. The active-site Proton acceptor is aspartate 248. 2 residues coordinate Mg(2+): asparagine 249 and aspartate 258. Aspartate 258 serves as a coordination point for ATP.

This sequence belongs to the SELO family. It depends on Mg(2+) as a cofactor. The cofactor is Mn(2+).

It catalyses the reaction L-seryl-[protein] + ATP = 3-O-(5'-adenylyl)-L-seryl-[protein] + diphosphate. It carries out the reaction L-threonyl-[protein] + ATP = 3-O-(5'-adenylyl)-L-threonyl-[protein] + diphosphate. The catalysed reaction is L-tyrosyl-[protein] + ATP = O-(5'-adenylyl)-L-tyrosyl-[protein] + diphosphate. The enzyme catalyses L-histidyl-[protein] + UTP = N(tele)-(5'-uridylyl)-L-histidyl-[protein] + diphosphate. It catalyses the reaction L-seryl-[protein] + UTP = O-(5'-uridylyl)-L-seryl-[protein] + diphosphate. It carries out the reaction L-tyrosyl-[protein] + UTP = O-(5'-uridylyl)-L-tyrosyl-[protein] + diphosphate. Its function is as follows. Nucleotidyltransferase involved in the post-translational modification of proteins. It can catalyze the addition of adenosine monophosphate (AMP) or uridine monophosphate (UMP) to a protein, resulting in modifications known as AMPylation and UMPylation. The sequence is that of Protein nucleotidyltransferase YdiU from Salmonella typhi.